The primary structure comprises 273 residues: Putative methyltransferase Cher3 (273 aa).

In terms of domain architecture, CheR-type methyltransferase spans 1-273 (MTSERNTDIE…VKPQRIFRKS (273 aa)). S-adenosyl-L-methionine contacts are provided by residues serine 76, arginine 80, glutamate 114, aspartate 137, 199–200 (SL), and 215–216 (RN).

In Pseudomonas putida (strain ATCC 47054 / DSM 6125 / CFBP 8728 / NCIMB 11950 / KT2440), this protein is Putative methyltransferase Cher3 (cheR3).